The sequence spans 91 residues: uncharacterized protein (91 aa).

A signal peptide spans 1-18 (MKVNLILFSLFLLVSIMA). The N-palmitoyl cysteine moiety is linked to residue C19. The S-diacylglycerol cysteine moiety is linked to residue C19.

The protein localises to the cell membrane. This is an uncharacterized protein from Escherichia coli (strain K12).